The primary structure comprises 215 residues: Nucleoside triphosphate pyrophosphatase (215 aa).

The Proton acceptor role is filled by Asp-77.

Belongs to the Maf family. A divalent metal cation is required as a cofactor.

The protein resides in the cytoplasm. The catalysed reaction is a ribonucleoside 5'-triphosphate + H2O = a ribonucleoside 5'-phosphate + diphosphate + H(+). It carries out the reaction a 2'-deoxyribonucleoside 5'-triphosphate + H2O = a 2'-deoxyribonucleoside 5'-phosphate + diphosphate + H(+). Nucleoside triphosphate pyrophosphatase. May have a dual role in cell division arrest and in preventing the incorporation of modified nucleotides into cellular nucleic acids. This chain is Nucleoside triphosphate pyrophosphatase, found in Rickettsia peacockii (strain Rustic).